Here is a 694-residue protein sequence, read N- to C-terminus: Probable metal-nicotianamine transporter YSL8 (694 aa).

The next 14 membrane-spanning stretches (helical) occupy residues 38–58 (ITVR…FIVM), 62–82 (LTSG…FFLM), 110–130 (CVIS…ILGM), 154–174 (LGRL…SIVP), 215–235 (ILFK…FYAA), 265–285 (VGVG…GSVV), 319–339 (VFIS…SIVL), 393–413 (IAAA…PHIF), 421–441 (VVWA…GTGL), 467–487 (GGVV…STAS), 506–526 (MFVS…MVFW), 567–587 (LRFC…KEVA), 608–628 (FFLG…LFLW), and 643–663 (VASG…ILSL).

It belongs to the YSL (TC 2.A.67.2) family. Expressed in root epidermis and exoderm.

The protein localises to the membrane. May be involved in the transport of nicotianamine-chelated metals. This is Probable metal-nicotianamine transporter YSL8 (YSL8) from Oryza sativa subsp. japonica (Rice).